Consider the following 750-residue polypeptide: K(+)-insensitive pyrophosphate-energized proton pump (750 aa).

Helical transmembrane passes span 1–21 (MYGL…YQGI), 51–71 (FIII…GGLN), 78–98 (VVFI…VAWF), 133–153 (IGML…LFIP), and 161–181 (FIGF…AGGI). K184 contacts substrate. 3 residues coordinate Mg(2+): D187, D191, and D216. 6 helical membrane passes run 227–247 (DGFE…LLAI), 257–277 (LVWI…SYWV), 301–321 (LVWL…YMLI), 327–347 (GTMW…GALI), 391–411 (WMGL…TLGL), and 420–440 (VFAF…TIAV). D448 contacts Mg(2+). Helical transmembrane passes span 503 to 523 (VLIG…IMIL), 538 to 558 (ILWP…YWFT), 607 to 627 (GMIN…CLES), and 629 to 649 (LFIG…IFMA). Ca(2+) is bound by residues D656, D681, and D685. K688 provides a ligand contact to substrate. 2 consecutive transmembrane segments (helical) span residues 694 to 714 (ALNP…ELAI) and 716 to 736 (LPTT…LVFV).

It belongs to the H(+)-translocating pyrophosphatase (TC 3.A.10) family. K(+)-insensitive subfamily. As to quaternary structure, homodimer. The cofactor is Mg(2+).

Its subcellular location is the cell inner membrane. It carries out the reaction diphosphate + H2O + H(+)(in) = 2 phosphate + 2 H(+)(out). Its function is as follows. Proton pump that utilizes the energy of pyrophosphate hydrolysis as the driving force for proton movement across the membrane. Generates a proton motive force. This chain is K(+)-insensitive pyrophosphate-energized proton pump, found in Chlorobaculum tepidum (strain ATCC 49652 / DSM 12025 / NBRC 103806 / TLS) (Chlorobium tepidum).